Consider the following 123-residue polypeptide: Translation initiation factor 1A (123 aa).

The segment covering 1–11 (MSPDKTEDEDK) has biased composition (acidic residues). The tract at residues 1–26 (MSPDKTEDEDKDVNVDQDQFNEEEES) is disordered. Residues 28–102 (GRVILPNKKK…EKADVVYRYT (75 aa)) form the S1-like domain.

It belongs to the eIF-1A family.

In terms of biological role, seems to be required for maximal rate of protein biosynthesis. Enhances ribosome dissociation into subunits and stabilizes the binding of the initiator Met-tRNA(I) to 40 S ribosomal subunits. The protein is Translation initiation factor 1A (eIF1A) of Thermoplasma volcanium (strain ATCC 51530 / DSM 4299 / JCM 9571 / NBRC 15438 / GSS1).